The primary structure comprises 134 residues: UPF0412 protein YaaI (134 aa).

An N-terminal signal peptide occupies residues 1–23; sequence MKSVFTLSASLAISLMLCCTAQA.

The protein belongs to the UPF0412 family.

This Escherichia coli O17:K52:H18 (strain UMN026 / ExPEC) protein is UPF0412 protein YaaI.